We begin with the raw amino-acid sequence, 338 residues long: Glycerol-3-phosphate dehydrogenase [NAD(P)+] (338 aa).

The NADPH site is built by Ser-13, Trp-14, and Lys-108. Lys-108, Gly-139, and Ser-141 together coordinate sn-glycerol 3-phosphate. Ala-143 is a binding site for NADPH. Sn-glycerol 3-phosphate-binding residues include Lys-194, Asp-247, Ser-257, Arg-258, and Asn-259. The Proton acceptor role is filled by Lys-194. Arg-258 serves as a coordination point for NADPH. Positions 282 and 284 each coordinate NADPH.

This sequence belongs to the NAD-dependent glycerol-3-phosphate dehydrogenase family.

Its subcellular location is the cytoplasm. The enzyme catalyses sn-glycerol 3-phosphate + NAD(+) = dihydroxyacetone phosphate + NADH + H(+). It catalyses the reaction sn-glycerol 3-phosphate + NADP(+) = dihydroxyacetone phosphate + NADPH + H(+). Its pathway is membrane lipid metabolism; glycerophospholipid metabolism. Functionally, catalyzes the reduction of the glycolytic intermediate dihydroxyacetone phosphate (DHAP) to sn-glycerol 3-phosphate (G3P), the key precursor for phospholipid synthesis. In Streptococcus uberis (strain ATCC BAA-854 / 0140J), this protein is Glycerol-3-phosphate dehydrogenase [NAD(P)+].